The sequence spans 1446 residues: MNEDHEAGNSSREAEVHQLARQFTDQSNYSAAGQNPFAVEAGSALDPNGEHFNARAWCKAMLQMHTGDKQAHPLRTLGVAFSNLNVHGFGSDTDYQKSVGNVWLEVLSLVSKAFGQKQRKIEILQNMEGLVEAGEMLVVLGPPGSGCSTFLKTIAGETYGFHVDKNSNINFQGIAKQMAHEFRGEAIYTAEVDVHFPKLTVGDTLYFAARARAPRHIPGGVNATQYASHMRDVIMAMFGISHTKNTIVGNDFIRGVSGGERKRVSIAEACLSNAPLQCWDNSTRGLDSANAIEFCKTLRMQADINGTTACVSLYQAPQAAYDYFDKALVLYEGREIYFGRTSMAKQYFLDMGFVCPDRQTDADFLTSMTSHLERVVQPGYEGRVPRTPDEFAARWRASPQRAQLLQDIKCYNAKFALDGEYLDKLKQSRRAQQAKAQRVSSPYTLSYVQQVELCLWRGYQRLKADPSVTISSVFGNTIISLVIASIFYNLKADTSTFFQRGALLFFAVLMNALGCGLEMLTLYAQRGIIEKHSRYALYHPSAEAFSSMIMDLPYKIINAITSNIVLYFMTNLRREPGAFFFFVFTSFVLTLTMSMFFRSMASLSRSLVQALPFSAVLLLGLSMYTGFTIPTGYMLGWARWIAYINPISYGFESLLINEFHNRDFPCMNYVPSGPGYTDLGLNNRVCSTVGSVPGQAFVNGDAYIESAYIYTASHKWRNIGVIFAYMFLLAAVYLVATDFITEKKSKGEILVFPRGHEALKKGKSDEDLEEGSGRSVTVEKTGSDGLTMIERQTAIFQWKDVCFDIKIGKENRRILDHVDGWVKPGTLTALMGVSGAGKTTLLDVLATRTSVGIISGEILVDGQPRDDSFQRKTGYAQQQDLHLSTATVREALEFSALLRQSAHVPRQEKIDYVTEVIKLLDMTEYADAVIGVPGEGLNVEQRKRLTIGVELAARPQLLLFLDEPTSGLDSQTSWAILDLLDKLKKNGQAILCTIHQPSAMLFQRFDRLLFLQAGGRTVYFGEVGENSQILIDYFVRNGGPPCPPAANPAEWMLDVIGAAPGSHTNINWFETWRKSPEYARVQEHLAELKRERPEQTNLFRTTSSQKREDKASYREFAAPFCAQLCEVQVRVFQQIWRSPTYIYSKTALCVLSALFVGFSLFHTPNTIQGLQNQMFGIFMLLTVFGQLIQQIMPHFVAQRALYEVRERPAKTYSWKAFIISNIVVELPWNSLMSVLMFLCWYYPIGLYRNAEPTDAVSLRGTQMWLMVWTFLLFSSTFAHFMIAAFDAAENAGNLGNLLFLLCLIFCGVLATPGQLPGFWIFMYRVSPFTYLVSGMLSVGISNTNATCADNEYLRFDPVNGTCGKYMDSYISNMGGYLEDEMATSDCSFCPIKETNVFLSSVSSSYSEIWRNFGLMWVFIVFNIFAACLLYWWVRVPRVKKPVAKTE.

N-linked (GlcNAc...) asparagine glycosylation is found at asparagine 9, asparagine 28, asparagine 222, asparagine 281, and asparagine 305. The ABC transporter 1 domain occupies 104–357 (LEVLSLVSKA…FLDMGFVCPD (254 aa)). 6 helical membrane passes run 468–488 (VTIS…SIFY), 502–522 (ALLF…MLTL), 548–568 (MIMD…VLYF), 577–597 (GAFF…SMFF), 610–630 (ALPF…FTIP), and 719–739 (IGVI…ATDF). The 243-residue stretch at 796–1038 (FQWKDVCFDI…ILIDYFVRNG (243 aa)) folds into the ABC transporter 2 domain. ATP is bound at residue 832 to 839 (GVSGAGKT). Helical transmembrane passes span 1147–1167 (ALCV…PNTI), 1177–1197 (IFML…HFVA), 1217–1237 (FIIS…VLMF), 1265–1285 (LMVW…IAAF), and 1301–1321 (LCLI…FWIF). Asparagine 1344 and asparagine 1359 each carry an N-linked (GlcNAc...) asparagine glycan. A helical transmembrane segment spans residues 1412-1432 (FGLMWVFIVFNIFAACLLYWW).

Belongs to the ABC transporter superfamily. ABCG family. PDR (TC 3.A.1.205) subfamily.

It localises to the cell membrane. Its function is as follows. ABC-type transporter; part of the gene cluster that mediates the biosynthesis of the sesterterpenes ophiobolins, fungal phytotoxins with potential anti-cancer activities. Acts as a specific transporter involved in ophiobolins secretion. The protein is ABC-type transporter oblD of Aspergillus clavatus (strain ATCC 1007 / CBS 513.65 / DSM 816 / NCTC 3887 / NRRL 1 / QM 1276 / 107).